Reading from the N-terminus, the 180-residue chain is Putative adenylate kinase (180 aa).

ATP contacts are provided by G10, G12, K13, T14, and T15. The NMP stretch occupies residues 30–50 (SVKELALSRGIGERVSDEIEI). Positions 99-109 (ARGYSKKKLAE) are LID. Residues R100 and K138 each contribute to the ATP site.

Belongs to the adenylate kinase family. AK6 subfamily. As to quaternary structure, interacts with uS11. Not a structural component of 40S pre-ribosomes, but transiently interacts with them by binding to uS11.

It catalyses the reaction AMP + ATP = 2 ADP. The catalysed reaction is ATP + H2O = ADP + phosphate + H(+). Functionally, broad-specificity nucleoside monophosphate (NMP) kinase that catalyzes the reversible transfer of the terminal phosphate group between nucleoside triphosphates and monophosphates. Also has ATPase activity. Involved in the late maturation steps of the 30S ribosomal particles, specifically 16S rRNA maturation. While NMP activity is not required for ribosome maturation, ATPase activity is. Associates transiently with small ribosomal subunit protein uS11. ATP hydrolysis breaks the interaction with uS11. May temporarily remove uS11 from the ribosome to enable a conformational change of the ribosomal RNA that is needed for the final maturation step of the small ribosomal subunit. The polypeptide is Putative adenylate kinase (Thermococcus onnurineus (strain NA1)).